The sequence spans 237 residues: Large ribosomal subunit protein uL3 (237 aa).

Disordered regions lie at residues 133 to 155 (ASHG…DPGK) and 213 to 237 (PENA…EGAE). Polar residues predominate over residues 135–150 (HGNSITHRSHGSTGQR). N5-methylglutamine is present on Gln-151. Over residues 220–237 (AGLRAGAKAEAAATEGAE) the composition is skewed to low complexity.

Belongs to the universal ribosomal protein uL3 family. Part of the 50S ribosomal subunit. Forms a cluster with proteins L14 and L19. In terms of processing, methylated by PrmB.

One of the primary rRNA binding proteins, it binds directly near the 3'-end of the 23S rRNA, where it nucleates assembly of the 50S subunit. This Brucella suis biovar 1 (strain 1330) protein is Large ribosomal subunit protein uL3.